Consider the following 288-residue polypeptide: Fatty acid-binding protein TM_1468 (288 aa).

The region spanning 3–283 (VKILVDSTAD…PGTVGFGIEV (281 aa)) is the DegV domain. Residues T63 and S96 each coordinate hexadecanoate.

As to quaternary structure, monomer.

Its function is as follows. Binds long-chain fatty acids, such as palmitate, and may play a role in lipid transport or fatty acid metabolism. This is Fatty acid-binding protein TM_1468 from Thermotoga maritima (strain ATCC 43589 / DSM 3109 / JCM 10099 / NBRC 100826 / MSB8).